A 1075-amino-acid chain; its full sequence is Paired amphipathic helix protein pst2 (1075 aa).

PAH domains lie at 28–102, 138–208, and 243–319; these read SPNG…LPSS, LPCT…LPSS, and RPDN…TSLS. A phosphoserine mark is found at S641 and S643. The disordered stretch occupies residues 647–700; that stretch reads LTEFVKQPKINGQRESRSAAAARKKEESGNKSQSNSQNSLSDESGNVTPVSKKQ. The segment covering 658–675 has biased composition (basic and acidic residues); sequence GQRESRSAAAARKKEESG. Residues 676 to 691 are compositionally biased toward low complexity; the sequence is NKSQSNSQNSLSDESG.

Heterotetramer of alp13, clr6, prw1 and pst2.

Its subcellular location is the nucleus. Has a role in chromatin assembly and chromosome segregation. Involved in the deacetylation of histones. This is Paired amphipathic helix protein pst2 (pst2) from Schizosaccharomyces pombe (strain 972 / ATCC 24843) (Fission yeast).